A 537-amino-acid chain; its full sequence is CTP synthase (537 aa).

The segment at 1–265 (MVHFIFVTGG…DNKVLKFFNI (265 aa)) is amidoligase domain. Ser13 contacts CTP. Residue Ser13 participates in UTP binding. Residues 14–19 (SLGKGL) and Asp71 each bind ATP. Positions 71 and 139 each coordinate Mg(2+). Residues 146 to 148 (DIE) and Lys222 contribute to the CTP site. Lys222 contacts UTP. Residues 290 to 536 (RIAIIAKYHK…IKAAIEYNKC (247 aa)) form the Glutamine amidotransferase type-1 domain. Residue Gly352 coordinates L-glutamine. Cys379 (nucleophile; for glutamine hydrolysis) is an active-site residue. L-glutamine contacts are provided by residues 380–383 (FGMQ), Glu403, and Arg464. Active-site residues include His509 and Glu511.

This sequence belongs to the CTP synthase family. In terms of assembly, homotetramer.

The enzyme catalyses UTP + L-glutamine + ATP + H2O = CTP + L-glutamate + ADP + phosphate + 2 H(+). The catalysed reaction is L-glutamine + H2O = L-glutamate + NH4(+). It catalyses the reaction UTP + NH4(+) + ATP = CTP + ADP + phosphate + 2 H(+). The protein operates within pyrimidine metabolism; CTP biosynthesis via de novo pathway; CTP from UDP: step 2/2. Allosterically activated by GTP, when glutamine is the substrate; GTP has no effect on the reaction when ammonia is the substrate. The allosteric effector GTP functions by stabilizing the protein conformation that binds the tetrahedral intermediate(s) formed during glutamine hydrolysis. Inhibited by the product CTP, via allosteric rather than competitive inhibition. Its function is as follows. Catalyzes the ATP-dependent amination of UTP to CTP with either L-glutamine or ammonia as the source of nitrogen. Regulates intracellular CTP levels through interactions with the four ribonucleotide triphosphates. This is CTP synthase from Rickettsia peacockii (strain Rustic).